The chain runs to 310 residues: Porphobilinogen deaminase (310 aa).

The residue at position 242 (Cys-242) is an S-(dipyrrolylmethanemethyl)cysteine.

Belongs to the HMBS family. As to quaternary structure, monomer. Dipyrromethane serves as cofactor.

The catalysed reaction is 4 porphobilinogen + H2O = hydroxymethylbilane + 4 NH4(+). It participates in porphyrin-containing compound metabolism; protoporphyrin-IX biosynthesis; coproporphyrinogen-III from 5-aminolevulinate: step 2/4. In terms of biological role, tetrapolymerization of the monopyrrole PBG into the hydroxymethylbilane pre-uroporphyrinogen in several discrete steps. The protein is Porphobilinogen deaminase of Psychromonas ingrahamii (strain DSM 17664 / CCUG 51855 / 37).